Reading from the N-terminus, the 575-residue chain is Serine/threonine-protein kinase YPK1 (575 aa).

The interval 1 to 53 is disordered; sequence MMSWKFGKKFKEGGFLSGKHHSSNNNSPSDTSRSTTPTPGNPHPEDAVKPPVP. Over residues 23-38 the composition is skewed to low complexity; that stretch reads SNNNSPSDTSRSTTPT. The region spanning 245–500 is the Protein kinase domain; the sequence is FELLKVIGKG…AQDIKNHPFF (256 aa). ATP contacts are provided by residues 251–259 and Lys-274; that span reads IGKGSFGKV. Asp-368 serves as the catalytic Proton acceptor. An AGC-kinase C-terminal domain is found at 502-573; it reads KHINFTKLWN…SVSPLGESVG (72 aa). Residues Ser-543 and Ser-562 each carry the phosphoserine modification.

Belongs to the protein kinase superfamily. AGC Ser/Thr protein kinase family. RAC subfamily.

It catalyses the reaction L-seryl-[protein] + ATP = O-phospho-L-seryl-[protein] + ADP + H(+). The catalysed reaction is L-threonyl-[protein] + ATP = O-phospho-L-threonyl-[protein] + ADP + H(+). Probable serine/threonine-protein kinase which may act in the sphingolipid-mediated signaling pathway. May act downstream of TORC2 (TOR complex 2) and PDK1 to regulate sphingolipid metabolism. This chain is Serine/threonine-protein kinase YPK1, found in Cryptococcus neoformans var. grubii serotype A (strain H99 / ATCC 208821 / CBS 10515 / FGSC 9487) (Filobasidiella neoformans var. grubii).